The sequence spans 285 residues: Nucleotide-binding protein Pnap_0906 (285 aa).

8–15 (GMSGSGKS) is a binding site for ATP. 57–60 (DVRS) lines the GTP pocket.

This sequence belongs to the RapZ-like family.

Its function is as follows. Displays ATPase and GTPase activities. The polypeptide is Nucleotide-binding protein Pnap_0906 (Polaromonas naphthalenivorans (strain CJ2)).